The following is a 157-amino-acid chain: Crossover junction endodeoxyribonuclease RuvC (157 aa).

Active-site residues include Asp7, Glu67, and Asp140. The Mg(2+) site is built by Asp7, Glu67, and Asp140.

This sequence belongs to the RuvC family. In terms of assembly, homodimer which binds Holliday junction (HJ) DNA. The HJ becomes 2-fold symmetrical on binding to RuvC with unstacked arms; it has a different conformation from HJ DNA in complex with RuvA. In the full resolvosome a probable DNA-RuvA(4)-RuvB(12)-RuvC(2) complex forms which resolves the HJ. Requires Mg(2+) as cofactor.

Its subcellular location is the cytoplasm. The enzyme catalyses Endonucleolytic cleavage at a junction such as a reciprocal single-stranded crossover between two homologous DNA duplexes (Holliday junction).. Its function is as follows. The RuvA-RuvB-RuvC complex processes Holliday junction (HJ) DNA during genetic recombination and DNA repair. Endonuclease that resolves HJ intermediates. Cleaves cruciform DNA by making single-stranded nicks across the HJ at symmetrical positions within the homologous arms, yielding a 5'-phosphate and a 3'-hydroxyl group; requires a central core of homology in the junction. The consensus cleavage sequence is 5'-(A/T)TT(C/G)-3'. Cleavage occurs on the 3'-side of the TT dinucleotide at the point of strand exchange. HJ branch migration catalyzed by RuvA-RuvB allows RuvC to scan DNA until it finds its consensus sequence, where it cleaves and resolves the cruciform DNA. The sequence is that of Crossover junction endodeoxyribonuclease RuvC from Rickettsia bellii (strain RML369-C).